Here is a 610-residue protein sequence, read N- to C-terminus: Methionine--tRNA ligase (610 aa).

The short motif at 12 to 22 is the 'HIGH' region element; that stretch reads PYANGPRHIGH. Residues C144, C147, C157, and C160 each contribute to the Zn(2+) site. The short motif at 348–352 is the 'KMSKS' region element; sequence KFSSS. S351 provides a ligand contact to ATP.

It belongs to the class-I aminoacyl-tRNA synthetase family. MetG type 1 subfamily. Monomer. Zn(2+) serves as cofactor.

It localises to the cytoplasm. It catalyses the reaction tRNA(Met) + L-methionine + ATP = L-methionyl-tRNA(Met) + AMP + diphosphate. Is required not only for elongation of protein synthesis but also for the initiation of all mRNA translation through initiator tRNA(fMet) aminoacylation. The protein is Methionine--tRNA ligase of Corynebacterium diphtheriae (strain ATCC 700971 / NCTC 13129 / Biotype gravis).